The sequence spans 231 residues: Caspase-like protein (231 aa).

Belongs to the peptidase C14A family.

The sequence is that of Caspase-like protein from Trichoplusia ni ascovirus 2c (TnAV-2c).